The chain runs to 686 residues: Kinesin light chain (686 aa).

Disordered regions lie at residues Met-1–Gln-23 and Lys-158–Ala-204. The stretch at Ser-20–Asp-160 forms a coiled coil. TPR repeat units follow at residues Leu-215–Thr-248, Ala-257–Thr-290, Ala-299–Val-332, Ala-341–Lys-374, Ala-383–Arg-416, and Thr-472–Ala-505. Disordered regions lie at residues Gln-520–Thr-558 and Gly-586–Phe-686. Over residues Asp-675 to Phe-686 the composition is skewed to polar residues.

Belongs to the kinesin light chain family. In terms of assembly, oligomeric complex composed of two heavy chains and two light chains. Phosphorylation may modulate the process of mechanochemical coupling.

It is found in the cytoplasm. It localises to the cytoskeleton. Kinesin is a microtubule-associated force-producing protein that may play a role in organelle transport. The light chain may function in coupling of cargo to the heavy chain or in the modulation of its ATPase activity. This chain is Kinesin light chain, found in Strongylocentrotus purpuratus (Purple sea urchin).